Consider the following 414-residue polypeptide: Cytochrome c-554 (414 aa).

The first 24 residues, 1-24 (MQSSRPSDRQLAIVVSVAVGIVVA), serve as a signal peptide directing secretion. Heme-binding residues include M110, C131, C134, H135, M154, C179, C182, H183, M283, C294, C297, H298, C378, C381, and H382.

Post-translationally, binds 4 heme groups per subunit. The N-terminus is blocked.

The protein localises to the periplasm. Serves as the immediate electron donor to the oxidized BChl2 (bacteriochlorophyll dimer) that is oxidized in the first step of light-induced charge separation. Can also oxidize low-potential substrates. The protein is Cytochrome c-554 (puf2C) of Chloroflexus aurantiacus (strain ATCC 29366 / DSM 635 / J-10-fl).